The sequence spans 333 residues: MQSSVNEFLTPRHIDVQVVSPTRAKITLEPLERGFGHTLGNALRRILLSSMPGCAVVEAEIDGVLHEYSAIEGVQEDVIEILLNLKGLAIKLHGRDEVTLTLSKKGSGVVTAADIQLDHDVEIVNPDHVIANLASNGALNMKLVVARGRGYEPADSRQSDEDESRSIGRLQLDSSFSPVRRIAYVVENARVEQRTNLDKLVIDLETNGTLDPEEAIRRAATILQQQLAAFVDLKGDSEPVVVEQEDEIDPILLRPVDDLELTVRSANCLKAENIYYIGDLIQRTEVELLKTPNLGKKSLTEIKDVLASRGLSLGMRLDNWPPASLKKDDKATA.

The interval 1-234 is alpha N-terminal domain (alpha-NTD); sequence MQSSVNEFLT…QQLAAFVDLK (234 aa). Residues 248–333 are alpha C-terminal domain (alpha-CTD); that stretch reads IDPILLRPVD…SLKKDDKATA (86 aa).

It belongs to the RNA polymerase alpha chain family. In terms of assembly, homodimer. The RNAP catalytic core consists of 2 alpha, 1 beta, 1 beta' and 1 omega subunit. When a sigma factor is associated with the core the holoenzyme is formed, which can initiate transcription.

The catalysed reaction is RNA(n) + a ribonucleoside 5'-triphosphate = RNA(n+1) + diphosphate. DNA-dependent RNA polymerase catalyzes the transcription of DNA into RNA using the four ribonucleoside triphosphates as substrates. In Pseudomonas putida (Arthrobacter siderocapsulatus), this protein is DNA-directed RNA polymerase subunit alpha.